The primary structure comprises 303 residues: Ribosomal RNA small subunit methyltransferase H (303 aa).

S-adenosyl-L-methionine is bound by residues glycine 32–histidine 34, aspartate 52, phenylalanine 78, aspartate 99, and glutamine 106.

It belongs to the methyltransferase superfamily. RsmH family.

The protein resides in the cytoplasm. The enzyme catalyses cytidine(1402) in 16S rRNA + S-adenosyl-L-methionine = N(4)-methylcytidine(1402) in 16S rRNA + S-adenosyl-L-homocysteine + H(+). In terms of biological role, specifically methylates the N4 position of cytidine in position 1402 (C1402) of 16S rRNA. The protein is Ribosomal RNA small subunit methyltransferase H of Acinetobacter baylyi (strain ATCC 33305 / BD413 / ADP1).